The following is a 584-amino-acid chain: MITGTIARISGPVITARNMTGSRMYDVVWVGRAALPGEIIRLEGDEAVIQVYEDTTGLMIHEPVENTGVPLSVELGPGLLASIYDGVQRPLPALYAKSGNYISRGIMVPGLDREKRWAFNPVKKAGEMVQTGDVLGTVQEFHLVHSIMVPPGVSGEIKTIASGEFTVTDVVCTLADGTEITMLQRWPVRKGRPFVKRLDPEVPLLTGQRVFDTMFPLVKGGTAMIPGGFGTGKTVSEQTLAKWADTQVVVYIGCGERGNEMTDVLTEFPELTDPRTGYPLIERTIMIANTSNMPVAAREASIYTGITIAEYYRDMGMDVALLADSTSRWGEALREVSGRLEEMPGEEGYPAYLATRLAAFYERAGRVICAGSEEKTGSVTIIGAVSPPGGDFSEPITQNTLRIAGTFWALDANLAYRRHYPSVNWIRSYSLYLEDVEDWFSEKVARDWYQFRGRAMYILQKEVELQEIVQLVGPDALPDKEKVVLEIAKIIREDFLQQSAYSDDDSFCPLEKQYWMLKIIIWYYDAIRAAMRRNVPLRQLLSIPARSEIARMKEQRDLDRLKRLSDIVWEQTENLEVQTCSTAA.

Residue 227–234 (GGFGTGKT) coordinates ATP.

Belongs to the ATPase alpha/beta chains family. Has multiple subunits with at least A(3), B(3), C, D, E, F, H, I and proteolipid K(x).

It localises to the cell membrane. The catalysed reaction is ATP + H2O + 4 H(+)(in) = ADP + phosphate + 5 H(+)(out). Functionally, component of the A-type ATP synthase that produces ATP from ADP in the presence of a proton gradient across the membrane. The A chain is the catalytic subunit. The protein is A-type ATP synthase subunit A 2 of Methanospirillum hungatei JF-1 (strain ATCC 27890 / DSM 864 / NBRC 100397 / JF-1).